Consider the following 335-residue polypeptide: Teichoic acids export ATP-binding protein TagH (335 aa).

The ABC transporter domain maps to 26-246 (IKGLFMPKSQ…YDEFVKWFNK (221 aa)). An ATP-binding site is contributed by 60-67 (GINGSGKS).

The protein belongs to the ABC transporter superfamily. Teichoic acids exporter (TC 3.A.1.104.1) family. As to quaternary structure, the complex is composed of two ATP-binding proteins (TagH) and two transmembrane proteins (TagG).

It is found in the cell membrane. It catalyses the reaction ATP + H2O + teichoic acidSide 1 = ADP + phosphate + teichoic acidSide 2.. Part of the ABC transporter complex TagGH involved in teichoic acids export. Responsible for energy coupling to the transport system. This chain is Teichoic acids export ATP-binding protein TagH, found in Listeria monocytogenes serotype 4b (strain F2365).